We begin with the raw amino-acid sequence, 55 residues long: Large ribosomal subunit protein bL33 (55 aa).

This sequence belongs to the bacterial ribosomal protein bL33 family.

In Bradyrhizobium diazoefficiens (strain JCM 10833 / BCRC 13528 / IAM 13628 / NBRC 14792 / USDA 110), this protein is Large ribosomal subunit protein bL33.